A 342-amino-acid polypeptide reads, in one-letter code: MNKDLLLSSYDYTLANELIANYPANPKEDARLLVFDRKNKEIFHTTFKNLKDFLPDCAIFFNDTKVIKARIYGNKASGGKIELFLHQPFLNSHNPLFLAQIKGRVKKDEILYFKEDLKARVVELLDDGLRKVQFFQNDKTLDTSNLYNLLDKIGHIPLPPYIKREDEKSDLKDYQSIFAKNLGAVAAPTASLHFSETMFENLRKKHKIYHLTLHVGAGTFKGVECENIQEHKMHSEFFNIPQQACEIIDSKQAILGVGTTVTRTIEYYARTKTKSGFCDLFLHPQNPPIRQNHLLTNFHLPKSTLIMLVSAFIGREQCLKLYKLAIKEKYRFYSYGDAMLIL.

Belongs to the QueA family. In terms of assembly, monomer.

It is found in the cytoplasm. The enzyme catalyses 7-aminomethyl-7-carbaguanosine(34) in tRNA + S-adenosyl-L-methionine = epoxyqueuosine(34) in tRNA + adenine + L-methionine + 2 H(+). The protein operates within tRNA modification; tRNA-queuosine biosynthesis. Its function is as follows. Transfers and isomerizes the ribose moiety from AdoMet to the 7-aminomethyl group of 7-deazaguanine (preQ1-tRNA) to give epoxyqueuosine (oQ-tRNA). This chain is S-adenosylmethionine:tRNA ribosyltransferase-isomerase, found in Campylobacter jejuni subsp. jejuni serotype O:23/36 (strain 81-176).